The sequence spans 325 residues: Lipoyl synthase (325 aa).

A disordered region spans residues 1-32 (MPPLADASTETLSPAEQAAVRHPEKAHRPDQP). Residues 19–32 (AVRHPEKAHRPDQP) show a composition bias toward basic and acidic residues. [4Fe-4S] cluster contacts are provided by Cys66, Cys71, Cys77, Cys92, Cys96, Cys99, and Ser305. A Radical SAM core domain is found at 78-294 (WAKKHATFMI…AEVANAKGFL (217 aa)).

The protein belongs to the radical SAM superfamily. Lipoyl synthase family. The cofactor is [4Fe-4S] cluster.

The protein resides in the cytoplasm. The enzyme catalyses [[Fe-S] cluster scaffold protein carrying a second [4Fe-4S](2+) cluster] + N(6)-octanoyl-L-lysyl-[protein] + 2 oxidized [2Fe-2S]-[ferredoxin] + 2 S-adenosyl-L-methionine + 4 H(+) = [[Fe-S] cluster scaffold protein] + N(6)-[(R)-dihydrolipoyl]-L-lysyl-[protein] + 4 Fe(3+) + 2 hydrogen sulfide + 2 5'-deoxyadenosine + 2 L-methionine + 2 reduced [2Fe-2S]-[ferredoxin]. The protein operates within protein modification; protein lipoylation via endogenous pathway; protein N(6)-(lipoyl)lysine from octanoyl-[acyl-carrier-protein]: step 2/2. Its function is as follows. Catalyzes the radical-mediated insertion of two sulfur atoms into the C-6 and C-8 positions of the octanoyl moiety bound to the lipoyl domains of lipoate-dependent enzymes, thereby converting the octanoylated domains into lipoylated derivatives. In Beijerinckia indica subsp. indica (strain ATCC 9039 / DSM 1715 / NCIMB 8712), this protein is Lipoyl synthase.